Here is a 286-residue protein sequence, read N- to C-terminus: Undecaprenyl-diphosphatase (286 aa).

Transmembrane regions (helical) follow at residues 43-63, 91-111, 118-138, 150-170, 189-209, 236-256, and 264-284; these read FWKM…PIYF, LTII…KIIG, IIMG…DVMF, MSVG…VFPG, AAAL…ATCY, ITLA…VAWF, and GFVP…AWAL.

Belongs to the UppP family.

The protein resides in the cell inner membrane. The catalysed reaction is di-trans,octa-cis-undecaprenyl diphosphate + H2O = di-trans,octa-cis-undecaprenyl phosphate + phosphate + H(+). Its function is as follows. Catalyzes the dephosphorylation of undecaprenyl diphosphate (UPP). Confers resistance to bacitracin. The sequence is that of Undecaprenyl-diphosphatase from Koribacter versatilis (strain Ellin345).